The chain runs to 88 residues: Cell division topological specificity factor (88 aa).

It belongs to the MinE family.

In terms of biological role, prevents the cell division inhibition by proteins MinC and MinD at internal division sites while permitting inhibition at polar sites. This ensures cell division at the proper site by restricting the formation of a division septum at the midpoint of the long axis of the cell. In Pseudoalteromonas translucida (strain TAC 125), this protein is Cell division topological specificity factor.